Reading from the N-terminus, the 271-residue chain is Aquaporin-11 (271 aa).

Residues 1 to 14 (MSALLGLPPEVQDT) are Cytoplasmic-facing. The chain crosses the membrane as a helical span at residues 15 to 35 (CISLGLMLLVVLFMGLARVIA). Over 36-41 (RQQLHR) the chain is Lumenal. The chain crosses the membrane as a helical span at residues 42–62 (PMVHAFVLEFLATFQLCYCTH). The Cytoplasmic segment spans residues 63 to 76 (ELQLLSEQDSGHPT). The chain crosses the membrane as a helical span at residues 77 to 97 (WTLTLIYFFSLVHGLTLVGTA). Residues 98 to 166 (SNPCGVMMQM…NPINTDISKA (69 aa)) are Lumenal-facing. Positions 99 to 101 (NPC) match the NPC motif. A helical membrane pass occupies residues 167-187 (IIIEAICSFIFHSALLHFQEV). The Cytoplasmic segment spans residues 188 to 194 (RTKLRIH). A helical membrane pass occupies residues 195–215 (VLAALITFLAYAGGSLTGALF). Positions 216 to 218 (NPA) match the NPA motif. Over 216–234 (NPALALSLHFPCFDESFYK) the chain is Lumenal. Residues 235–255 (FFVVYWVAPSLGVLLMILMFS) traverse the membrane as a helical segment. At 256 to 271 (FFLPWLHNNQLSNKKE) the chain is on the cytoplasmic side.

The protein belongs to the MIP/aquaporin (TC 1.A.8) family. AQP11/AQP12 subfamily. Homodimer; disulfide-linked. Homotetramer. Can also form homomultimer. Post-translationally, not glycosylated. As to expression, expressed in retina specifically at retinal Mueller glial cells. Expressed in adult testis, in the elongated spermatids (ES) and in residual bodies inside Sertoli cells.

It is found in the endoplasmic reticulum membrane. Its subcellular location is the cytoplasmic vesicle membrane. It localises to the cell membrane. It catalyses the reaction H2O(in) = H2O(out). The catalysed reaction is glycerol(in) = glycerol(out). It carries out the reaction H2O2(out) = H2O2(in). Its function is as follows. Channel protein that facilitates the transport of water, glycerol and hydrogen peroxide across membrane of cell or organelles guaranteeing intracellular homeostasis in several organes like liver, kidney and brain. In situation of stress, participates in endoplasmic reticulum (ER) homeostasis by regulating redox homeostasis through the transport of hydrogen peroxide across the endoplasmic reticulum membrane thereby regulating the oxidative stress through the NADPH oxidase 2 pathway. Plays a role by maintaining an environment suitable for translation or protein foldings in the ER lumen namely by participating in the PKD1 glycosylation processing resulting in regulation of PKD1 membrane trafficking thereby preventing the accumulation of unfolding protein in ER. Plays a role in the proximal tubule function by regulating its endosomal acidification. May play a role in postnatal kidney development. This is Aquaporin-11 from Rattus norvegicus (Rat).